The primary structure comprises 789 residues: Potassium transporter 4 (789 aa).

The Cytoplasmic portion of the chain corresponds to 1–32 (MAPAESGVSPRRNPSQLSWMNLSSNLILAYQS). Residue S9 is modified to Phosphoserine. A helical transmembrane segment spans residues 33–53 (FGVVYGDLSTSPLYVFPSTFI). The Extracellular segment spans residues 54–68 (GKLHKHHNEDAVFGA). A helical transmembrane segment spans residues 69–89 (FSLIFWTLTLIPLLKYLLVLL). The Cytoplasmic segment spans residues 90–154 (SADDNGEGGT…FLEKHKRLRT (65 aa)). The chain crosses the membrane as a helical span at residues 155–175 (ALLLVVLFGAAMVIGDGVLTP). At 176–195 (ALSVLSSLSGLQATEKNVTD) the chain is on the extracellular side. Residues 196–216 (GELLVLACVILVGLFALQHCG) traverse the membrane as a helical segment. Residues 217–219 (THR) lie on the Cytoplasmic side of the membrane. The helical transmembrane segment at 220 to 240 (VAFMFAPIVIIWLISIFFIGL) threads the bilayer. Residues 241–270 (YNIIRWNPKIIHAVSPLYIIKFFRVTGQDG) are Extracellular-facing. The chain crosses the membrane as a helical span at residues 271–291 (WISLGGVLLSVTGTEAMFANL). Over 292 to 300 (GHFTSVSIR) the chain is Cytoplasmic. Residues 301–321 (VAFAVVVYPCLVVQYMGQAAF) traverse the membrane as a helical segment. Topologically, residues 322-340 (LSKNLGSIPNSFYDSVPDP) are extracellular. Residues 341-361 (VFWPVFVIATLAAIVGSQAVI) traverse the membrane as a helical segment. Residues 362 to 392 (TTTFSIIKQCHALGCFPRIKVVHTSKHIYGQ) lie on the Cytoplasmic side of the membrane. Residues 393–413 (IYIPEINWILMILTLAMAIGF) traverse the membrane as a helical segment. Residues 414-424 (RDTTLIGNAYG) lie on the Extracellular side of the membrane. The helical transmembrane segment at 425 to 445 (IACMVVMFITTFFMALVIVVV) threads the bilayer. Residues 446-450 (WQKSC) are Cytoplasmic-facing. The chain crosses the membrane as a helical span at residues 451-471 (FLAALFLGTLWIIEGVYLSAA). Residues 472–478 (LMKVTEG) lie on the Extracellular side of the membrane. The helical transmembrane segment at 479-499 (GWVPFVLTFIFMIAMYVWHYG) threads the bilayer. The Cytoplasmic portion of the chain corresponds to 500 to 789 (TRRKYSFDLH…LIEVGMIYYV (290 aa)).

Belongs to the HAK/KUP transporter (TC 2.A.72.3) family. As to expression, detected at very low levels in roots, stems, leaves and flowers of mature plants and strongly expressed in the roots of potassium-starved plants.

It is found in the cell membrane. High-affinity potassium transporter. This Arabidopsis thaliana (Mouse-ear cress) protein is Potassium transporter 4 (POT4).